Consider the following 837-residue polypeptide: MVGLGACTLTGVTLIFLLLPRSLESCGHIEISPPVVRLGDPVLASCTISPNCSKLDQQAKILWRLQDEPIQPGDRQHHLPDGTQESLITLPHLNYTQAFLFCLVPWEDSVQLLDQAELHAGYPPASPSNLSCLMHLTTNSLVCQWEPGPETHLPTSFILKSFRSRADCQYQGDTIPDCVAKKRQNNCSIPRKNLLLYQYMAIWVQAENMLGSSESPKLCLDPMDVVKLEPPMLQALDIGPDVVSHQPGCLWLSWKPWKPSEYMEQECELRYQPQLKGANWTLVFHLPSSKDQFELCGLHQAPVYTLQMRCIRSSLPGFWSPWSPGLQLRPTMKAPTIRLDTWCQKKQLDPGTVSVQLFWKPTPLQEDSGQIQGYLLSWSSPDHQGQDIHLCNTTQLSCIFLLPSEAQNVTLVAYNKAGTSSPTTVVFLENEGPAVTGLHAMAQDLNTIWVDWEAPSLLPQGYLIEWEMSSPSYNNSYKSWMIEPNGNITGILLKDNINPFQLYRITVAPLYPGIVGPPVNVYTFAGERAPPHAPALHLKHVGTTWAQLEWVPEAPRLGMIPLTHYTIFWADAGDHSFSVTLNISLHDFVLKHLEPASLYHVYLMATSRAGSTNSTGLTLRTLDPSDLNIFLGILCLVLLSTTCVVTWLCCKRRGKTSFWSDVPDPAHSSLSSWLPTIMTEETFQLPSFWDSSVPSITKITELEEDKKPTHWDSESSGNGSLPALVQAYVLQGDPREISNQSQPPSRTGDQVLYGQVLESPTSPGVMQYIRSDSTQPLLGGPTPSPKSYENIWFHSRPQETFVPQPPNQEDDCVFGPPFDFPLFQGLQVHGVEEQGGF.

An N-terminal signal peptide occupies residues 1 to 25 (MVGLGACTLTGVTLIFLLLPRSLES). Cystine bridges form between Cys26-Cys52 and Cys46-Cys102. An Ig-like C2-type domain is found at 26 to 118 (CGHIEISPPV…SVQLLDQAEL (93 aa)). Residues 26–626 (CGHIEISPPV…LTLRTLDPSD (601 aa)) are Extracellular-facing. N-linked (GlcNAc...) asparagine glycosylation is found at Asn51, Asn94, and Asn129. Fibronectin type-III domains follow at residues 126–231 (SPSN…LEPP), 236–331 (LDIG…LRPT), 334–433 (APTI…NEGP), 434–529 (AVTG…GERA), and 530–624 (PPHA…TLDP). 5 disulfides stabilise this stretch: Cys132/Cys143, Cys168/Cys219, Cys178/Cys187, Cys249/Cys296, and Cys267/Cys310. N-linked (GlcNAc...) asparagine glycans are attached at residues Asn186 and Asn279. Positions 319 to 323 (WSPWS) match the WSXWS motif motif. Residues Asn392, Asn408, Asn474, Asn487, Asn582, and Asn613 are each glycosylated (N-linked (GlcNAc...) asparagine). A helical membrane pass occupies residues 627–650 (LNIFLGILCLVLLSTTCVVTWLCC). Topologically, residues 651 to 837 (KRRGKTSFWS…VHGVEEQGGF (187 aa)) are cytoplasmic. Residues 658–666 (FWSDVPDPA) carry the Box 1 motif motif.

Belongs to the type I cytokine receptor family. Type 2 subfamily. As to quaternary structure, homodimer. The dimeric receptor binds two CSF3 molecules. Interacts with CEACAM1; down-regulates the CSF3R-STAT3 pathway through recruitment of PTPN6 that dephosphorylates CSF3R. N-glycosylated. As to expression, found in bone marrow.

It is found in the membrane. Receptor for granulocyte colony-stimulating factor (CSF3). In addition it may function in some adhesion or recognition events at the cell surface. This is Granulocyte colony-stimulating factor receptor (Csf3r) from Mus musculus (Mouse).